The chain runs to 510 residues: NAD(P)H-quinone oxidoreductase subunit 2 B, chloroplastic (510 aa).

Transmembrane regions (helical) follow at residues L24–L44, I57–F77, I99–I119, M124–C144, L149–Y169, Y183–G203, P227–A247, W295–I315, M323–D343, Y354–L374, A395–F415, L418–L438, and M484–I504.

This sequence belongs to the complex I subunit 2 family. NDH is composed of at least 16 different subunits, 5 of which are encoded in the nucleus.

Its subcellular location is the plastid. It is found in the chloroplast thylakoid membrane. The catalysed reaction is a plastoquinone + NADH + (n+1) H(+)(in) = a plastoquinol + NAD(+) + n H(+)(out). It carries out the reaction a plastoquinone + NADPH + (n+1) H(+)(in) = a plastoquinol + NADP(+) + n H(+)(out). In terms of biological role, NDH shuttles electrons from NAD(P)H:plastoquinone, via FMN and iron-sulfur (Fe-S) centers, to quinones in the photosynthetic chain and possibly in a chloroplast respiratory chain. The immediate electron acceptor for the enzyme in this species is believed to be plastoquinone. Couples the redox reaction to proton translocation, and thus conserves the redox energy in a proton gradient. This is NAD(P)H-quinone oxidoreductase subunit 2 B, chloroplastic from Lactuca sativa (Garden lettuce).